Here is a 257-residue protein sequence, read N- to C-terminus: 3-methyl-2-oxobutanoate hydroxymethyltransferase (257 aa).

Mg(2+) contacts are provided by Asp42 and Asp86. 3-methyl-2-oxobutanoate-binding positions include Asp42–Ser43, Asp86, and Lys116. Glu118 lines the Mg(2+) pocket. Catalysis depends on Glu185, which acts as the Proton acceptor.

Belongs to the PanB family. Homodecamer; pentamer of dimers. Mg(2+) serves as cofactor.

The protein resides in the cytoplasm. The enzyme catalyses 3-methyl-2-oxobutanoate + (6R)-5,10-methylene-5,6,7,8-tetrahydrofolate + H2O = 2-dehydropantoate + (6S)-5,6,7,8-tetrahydrofolate. The protein operates within cofactor biosynthesis; (R)-pantothenate biosynthesis; (R)-pantoate from 3-methyl-2-oxobutanoate: step 1/2. Its function is as follows. Catalyzes the reversible reaction in which hydroxymethyl group from 5,10-methylenetetrahydrofolate is transferred onto alpha-ketoisovalerate to form ketopantoate. The protein is 3-methyl-2-oxobutanoate hydroxymethyltransferase of Prochlorococcus marinus (strain MIT 9515).